The primary structure comprises 89 residues: Small ribosomal subunit protein uS15 (89 aa).

The protein belongs to the universal ribosomal protein uS15 family. In terms of assembly, part of the 30S ribosomal subunit. Forms a bridge to the 50S subunit in the 70S ribosome, contacting the 23S rRNA.

Its function is as follows. One of the primary rRNA binding proteins, it binds directly to 16S rRNA where it helps nucleate assembly of the platform of the 30S subunit by binding and bridging several RNA helices of the 16S rRNA. Functionally, forms an intersubunit bridge (bridge B4) with the 23S rRNA of the 50S subunit in the ribosome. The sequence is that of Small ribosomal subunit protein uS15 from Thiobacillus denitrificans (strain ATCC 25259 / T1).